Here is a 324-residue protein sequence, read N- to C-terminus: Tubulin alpha-8 chain (324 aa).

S15, G19, T20, T54, N81, and N103 together coordinate GTP. Residue E129 is part of the active site.

Belongs to the tubulin family. As to quaternary structure, dimer of alpha and beta chains. A typical microtubule is a hollow water-filled tube with an outer diameter of 25 nm and an inner diameter of 15 nM. Alpha-beta heterodimers associate head-to-tail to form protofilaments running lengthwise along the microtubule wall with the beta-tubulin subunit facing the microtubule plus end conferring a structural polarity. Microtubules usually have 13 protofilaments but different protofilament numbers can be found in some organisms and specialized cells. It depends on Mg(2+) as a cofactor. Post-translationally, some glutamate residues at the C-terminus are polyglycylated, resulting in polyglycine chains on the gamma-carboxyl group. Glycylation is mainly limited to tubulin incorporated into axonemes (cilia and flagella) whereas glutamylation is prevalent in neuronal cells, centrioles, axonemes, and the mitotic spindle. Both modifications can coexist on the same protein on adjacent residues, and lowering polyglycylation levels increases polyglutamylation, and reciprocally. The precise function of polyglycylation is still unclear. Some glutamate residues at the C-terminus are polyglutamylated, resulting in polyglutamate chains on the gamma-carboxyl group. Polyglutamylation plays a key role in microtubule severing by spastin (SPAST). SPAST preferentially recognizes and acts on microtubules decorated with short polyglutamate tails: severing activity by SPAST increases as the number of glutamates per tubulin rises from one to eight, but decreases beyond this glutamylation threshold.

The protein resides in the cytoplasm. It is found in the cytoskeleton. The catalysed reaction is GTP + H2O = GDP + phosphate + H(+). Tubulin is the major constituent of microtubules, a cylinder consisting of laterally associated linear protofilaments composed of alpha- and beta-tubulin heterodimers. Microtubules grow by the addition of GTP-tubulin dimers to the microtubule end, where a stabilizing cap forms. Below the cap, tubulin dimers are in GDP-bound state, owing to GTPase activity of alpha-tubulin. The protein is Tubulin alpha-8 chain of Gallus gallus (Chicken).